A 1250-amino-acid chain; its full sequence is DNA-directed RNA polymerase subunit beta (1250 aa).

Residues 1215 to 1250 (QDLNDDDINPDDTIDAELDDNLFDDDFDDTFDDDDL) are disordered.

The protein belongs to the RNA polymerase beta chain family. As to quaternary structure, the RNAP catalytic core consists of 2 alpha, 1 beta, 1 beta' and 1 omega subunit. When a sigma factor is associated with the core the holoenzyme is formed, which can initiate transcription.

The catalysed reaction is RNA(n) + a ribonucleoside 5'-triphosphate = RNA(n+1) + diphosphate. Functionally, DNA-dependent RNA polymerase catalyzes the transcription of DNA into RNA using the four ribonucleoside triphosphates as substrates. The sequence is that of DNA-directed RNA polymerase subunit beta from Acetivibrio thermocellus (strain ATCC 27405 / DSM 1237 / JCM 9322 / NBRC 103400 / NCIMB 10682 / NRRL B-4536 / VPI 7372) (Clostridium thermocellum).